Reading from the N-terminus, the 279-residue chain is Ribosomal RNA small subunit methyltransferase A (279 aa).

The S-adenosyl-L-methionine site is built by H12, L14, G39, E60, D81, and N118.

Belongs to the class I-like SAM-binding methyltransferase superfamily. rRNA adenine N(6)-methyltransferase family. RsmA subfamily.

It is found in the cytoplasm. The catalysed reaction is adenosine(1518)/adenosine(1519) in 16S rRNA + 4 S-adenosyl-L-methionine = N(6)-dimethyladenosine(1518)/N(6)-dimethyladenosine(1519) in 16S rRNA + 4 S-adenosyl-L-homocysteine + 4 H(+). In terms of biological role, specifically dimethylates two adjacent adenosines (A1518 and A1519) in the loop of a conserved hairpin near the 3'-end of 16S rRNA in the 30S particle. May play a critical role in biogenesis of 30S subunits. This Polaromonas naphthalenivorans (strain CJ2) protein is Ribosomal RNA small subunit methyltransferase A.